Consider the following 556-residue polypeptide: Adenine deaminase (556 aa).

This sequence belongs to the metallo-dependent hydrolases superfamily. Adenine deaminase family. Mn(2+) serves as cofactor.

The catalysed reaction is adenine + H2O + H(+) = hypoxanthine + NH4(+). This chain is Adenine deaminase, found in Methanocaldococcus jannaschii (strain ATCC 43067 / DSM 2661 / JAL-1 / JCM 10045 / NBRC 100440) (Methanococcus jannaschii).